The following is a 440-amino-acid chain: Long-chain alkane monooxygenase (440 aa).

Residues Asp58, 137 to 138 (SH), Tyr158, and 227 to 230 (AGMS) contribute to the FMN site.

It belongs to the NtaA/SnaA/DszA monooxygenase family. As to quaternary structure, homodimer.

It is found in the secreted. The enzyme catalyses a long-chain alkane + FMNH2 + O2 = a long chain fatty alcohol + FMN + H2O + H(+). Involved in the degradation of long-chain alkanes. Converts alkanes ranging from C(15) to C(36) into their corresponding primary alcohols. This chain is Long-chain alkane monooxygenase, found in Geobacillus thermodenitrificans (strain NG80-2).